Reading from the N-terminus, the 762-residue chain is Endonuclease MutS2 (762 aa).

Positions 1-22 (MSDAPKRSLNPTLMMNNNNTPP) are disordered. The segment covering 9–20 (LNPTLMMNNNNT) has biased composition (low complexity). 333 to 340 (GVNAGGKT) contributes to the ATP binding site. In terms of domain architecture, Smr spans 688 to 762 (LDLRGQRSEE…GGSGVKIVKL (75 aa)).

The protein belongs to the DNA mismatch repair MutS family. MutS2 subfamily. In terms of assembly, homodimer. Binds to stalled ribosomes, contacting rRNA.

ATPase activity is stimulated by DNA. Endonuclease that is involved in the suppression of homologous recombination and may thus have a key role in the control of bacterial genetic diversity. Also involved in repairing oxidative DNA damage. Has ATPase activity. Binds DNA. In terms of biological role, endonuclease that is involved in the suppression of homologous recombination and thus may have a key role in the control of bacterial genetic diversity. Its function is as follows. Acts as a ribosome collision sensor, splitting the ribosome into its 2 subunits. Detects stalled/collided 70S ribosomes which it binds and splits by an ATP-hydrolysis driven conformational change. Acts upstream of the ribosome quality control system (RQC), a ribosome-associated complex that mediates the extraction of incompletely synthesized nascent chains from stalled ribosomes and their subsequent degradation. Probably generates substrates for RQC. The protein is Endonuclease MutS2 of Helicobacter pylori (strain ATCC 700392 / 26695) (Campylobacter pylori).